The chain runs to 256 residues: H-2 class II histocompatibility antigen, A-B alpha chain (256 aa).

An N-terminal signal peptide occupies residues 1-23 (MPRSRALILGVLALTTMLSLCGG). Residues 24-111 (EDDIEADHVG…KRSNSTPATN (88 aa)) form an alpha-1 region. Topologically, residues 24–218 (EDDIEADHVG…IPAPMSELTE (195 aa)) are extracellular. The segment at 112 to 205 (EAPQATVFPK…GLEEPVLKHW (94 aa)) is alpha-2. In terms of domain architecture, Ig-like C1-type spans 114–206 (PQATVFPKSP…LEEPVLKHWE (93 aa)). An intrachain disulfide couples C134 to C190. A glycan (N-linked (GlcNAc...) asparagine) is linked at N145. Residues 206–218 (EPEIPAPMSELTE) form a connecting peptide region. Residues 219–244 (TVVCALGLSVGLVGIVVGTIFIIQGL) form a helical membrane-spanning segment. Topologically, residues 245-256 (RSGGTSRHPGPL) are cytoplasmic.

This sequence belongs to the MHC class II family.

The protein resides in the membrane. The protein is H-2 class II histocompatibility antigen, A-B alpha chain (H2-Aa) of Mus musculus (Mouse).